A 124-amino-acid chain; its full sequence is Heat-labile enterotoxin B chain (124 aa).

The first 21 residues, 1–21 (MNKVKCYVLFTALLSSLCAYG), serve as a signal peptide directing secretion. Cysteines 30 and 107 form a disulfide.

In terms of assembly, heterohexamer of one A chain and of five B chains.

Its function is as follows. The biological activity of the toxin is produced by the A chain, which activates intracellular adenyl cyclase. The sequence is that of Heat-labile enterotoxin B chain (eltB) from Escherichia coli O78:H11 (strain H10407 / ETEC).